A 345-amino-acid chain; its full sequence is Ribonucleoside-diphosphate reductase small chain 2 (345 aa).

M1 carries the post-translational modification N-acetylmethionine. The active site involves Y131. S169 and S332 each carry phosphoserine. T334 is modified (phosphothreonine). Position 336 is a phosphoserine (S336). A Glycyl lysine isopeptide (Lys-Gly) (interchain with G-Cter in ubiquitin) cross-link involves residue K337.

Belongs to the ribonucleoside diphosphate reductase small chain family. Heterotetramer of two large (R1) and two small (R2) subunits. S.cerevisiae has two different R1 subunits (RNR1 and RNR3) and two different R2 subunits (RNR2 and RNR4). The functional form of the small subunits is a RNR2-RNR4 heterodimer, where RNR2 provides the iron-radical center and RNR4 is required for proper folding of RNR2 and assembly with the large subunits. Under normal growth conditions, the active form of the large subunits is a homodimer of the constitutively expressed RNR1. In damaged cells or cells arrested for DNA synthesis, the reductase consists of multiple species because of the association of the small subunits (RNR2-RNR4) with either the RNR1 homodimer or a heterodimer of RNR1 and the damage-inducible RNR3. Interacts with DIF1.

The protein localises to the nucleus. The enzyme catalyses a 2'-deoxyribonucleoside 5'-diphosphate + [thioredoxin]-disulfide + H2O = a ribonucleoside 5'-diphosphate + [thioredoxin]-dithiol. Provides the precursors necessary for DNA synthesis. Catalyzes the biosynthesis of deoxyribonucleotides from the corresponding ribonucleotides. RNR4 is required for proper folding of RNR2 and assembly with the large subunits. This Saccharomyces cerevisiae (strain ATCC 204508 / S288c) (Baker's yeast) protein is Ribonucleoside-diphosphate reductase small chain 2 (RNR4).